A 207-amino-acid chain; its full sequence is Nuclear transcription factor Y subunit beta (207 aa).

Residues 1–52 (MTMDGDSSTTDASQLGISADYIGGSHYVIQPHDDTEDSMNDHEDTNGSKESF) are a domain. The segment at 27–52 (YVIQPHDDTEDSMNDHEDTNGSKESF) is disordered. Over residues 39 to 52 (MNDHEDTNGSKESF) the composition is skewed to basic and acidic residues. The segment at 53-142 (REQDIYLPIA…PLKLYLQKFR (90 aa)) is b domain. A DNA-binding region spans residues 59–65 (LPIANVA). Residues 86-97 (VQECVSEFISFI) are subunit association domain (SAD). Residue K140 forms a Glycyl lysine isopeptide (Lys-Gly) (interchain with G-Cter in ubiquitin) linkage. A c domain region spans residues 143–207 (EAMKGEKGIG…ISGVQQIQFS (65 aa)).

Belongs to the NFYB/HAP3 subunit family. As to quaternary structure, heterotrimeric transcription factor composed of three components, NF-YA, NF-YB and NF-YC. NF-YB and NF-YC must interact and dimerize for NF-YA association and DNA binding. Interacts with C1QBP. Monoubiquitination at Lys-140 plays an important role in transcriptional activation by allowing the deposition of histone H3 methylations as well as histone H2B monoubiquitination at 'Lys-121'.

The protein localises to the nucleus. In terms of biological role, component of the sequence-specific heterotrimeric transcription factor (NF-Y) which specifically recognizes a 5'-CCAAT-3' box motif found in the promoters of its target genes. NF-Y can function as both an activator and a repressor, depending on its interacting cofactors. In Homo sapiens (Human), this protein is Nuclear transcription factor Y subunit beta (NFYB).